Consider the following 54-residue polypeptide: Anti-adapter protein SpxO (54 aa).

As to quaternary structure, interacts with SpxH.

Functionally, inhibitor of Spx proteolytic control. Acts by interacting with SpxH/YjbH, which disrupts interaction between SpxH and Spx, and inhibits SpxH-enhanced proteolysis of Spx by ClpXP. Required for the stabilization of Spx and activation of Spx-regulated genes in response to cell wall stress. The protein is Anti-adapter protein SpxO of Bacillus subtilis (strain 168).